A 104-amino-acid polypeptide reads, in one-letter code: L-rhamnose mutarotase (104 aa).

Tyrosine 18 contacts substrate. Histidine 22 functions as the Proton donor in the catalytic mechanism. Substrate is bound by residues tyrosine 41 and 76 to 77; that span reads WW.

It belongs to the rhamnose mutarotase family. In terms of assembly, homodimer.

It is found in the cytoplasm. The catalysed reaction is alpha-L-rhamnose = beta-L-rhamnose. The protein operates within carbohydrate metabolism; L-rhamnose metabolism. Involved in the anomeric conversion of L-rhamnose. The sequence is that of L-rhamnose mutarotase from Escherichia coli (strain K12 / MC4100 / BW2952).